The primary structure comprises 70 residues: Large ribosomal subunit protein uL29 (70 aa).

It belongs to the universal ribosomal protein uL29 family.

In Methanocaldococcus jannaschii (strain ATCC 43067 / DSM 2661 / JAL-1 / JCM 10045 / NBRC 100440) (Methanococcus jannaschii), this protein is Large ribosomal subunit protein uL29 (rpl29).